The chain runs to 230 residues: Probable septum site-determining protein MinC (230 aa).

This sequence belongs to the MinC family. In terms of assembly, interacts with MinD and FtsZ.

Its function is as follows. Cell division inhibitor that blocks the formation of polar Z ring septums. Rapidly oscillates between the poles of the cell to destabilize FtsZ filaments that have formed before they mature into polar Z rings. Prevents FtsZ polymerization. In Rhodopseudomonas palustris (strain BisA53), this protein is Probable septum site-determining protein MinC.